Here is a 144-residue protein sequence, read N- to C-terminus: Putative pre-16S rRNA nuclease (144 aa).

Belongs to the YqgF nuclease family.

It localises to the cytoplasm. In terms of biological role, could be a nuclease involved in processing of the 5'-end of pre-16S rRNA. This Pseudomonas aeruginosa (strain LESB58) protein is Putative pre-16S rRNA nuclease.